A 293-amino-acid polypeptide reads, in one-letter code: Probable porphobilinogen deaminase (293 aa).

At Cys-233 the chain carries S-(dipyrrolylmethanemethyl)cysteine.

This sequence belongs to the HMBS family. Dipyrromethane is required as a cofactor.

It carries out the reaction 4 porphobilinogen + H2O = hydroxymethylbilane + 4 NH4(+). Its pathway is porphyrin-containing compound metabolism; protoporphyrin-IX biosynthesis; coproporphyrinogen-III from 5-aminolevulinate: step 2/4. In terms of biological role, tetrapolymerization of the monopyrrole PBG into the hydroxymethylbilane pre-uroporphyrinogen in several discrete steps. This Saccharolobus islandicus (strain Y.N.15.51 / Yellowstone #2) (Sulfolobus islandicus) protein is Probable porphobilinogen deaminase.